Reading from the N-terminus, the 160-residue chain is uncharacterized protein (160 aa).

This is an uncharacterized protein from Bacillus subtilis (strain 168).